The primary structure comprises 188 residues: Elongation factor P (188 aa).

Residue K34 is modified to N6-(3,6-diaminohexanoyl)-5-hydroxylysine.

The protein belongs to the elongation factor P family. Post-translationally, may be beta-lysylated on the epsilon-amino group of Lys-34 by the combined action of EpmA and EpmB, and then hydroxylated on the C5 position of the same residue by EpmC (if this protein is present). Lysylation is critical for the stimulatory effect of EF-P on peptide-bond formation. The lysylation moiety may extend toward the peptidyltransferase center and stabilize the terminal 3-CCA end of the tRNA. Hydroxylation of the C5 position on Lys-34 may allow additional potential stabilizing hydrogen-bond interactions with the P-tRNA.

The protein localises to the cytoplasm. It functions in the pathway protein biosynthesis; polypeptide chain elongation. Functionally, involved in peptide bond synthesis. Alleviates ribosome stalling that occurs when 3 or more consecutive Pro residues or the sequence PPG is present in a protein, possibly by augmenting the peptidyl transferase activity of the ribosome. Modification of Lys-34 is required for alleviation. The protein is Elongation factor P of Vibrio vulnificus (strain CMCP6).